Reading from the N-terminus, the 1373-residue chain is Insulin-like growth factor 1 receptor (1373 aa).

An N-terminal signal peptide occupies residues 1-30 (MKSGSGGGSPTSLWGLVFLSAALSLWPTSG). An intrachain disulfide couples Cys33 to Cys52. N-linked (GlcNAc...) asparagine glycosylation is found at Asn51, Asn102, and Asn135. Cystine bridges form between Cys150–Cys178, Cys182–Cys205, Cys192–Cys211, Cys215–Cys224, Cys219–Cys230, Cys231–Cys239, Cys235–Cys248, Cys251–Cys260, Cys264–Cys276, Cys282–Cys303, Cys307–Cys321, Cys324–Cys328, and Cys332–Cys354. Asn245 carries N-linked (GlcNAc...) asparagine glycosylation. Asn314 carries an N-linked (GlcNAc...) asparagine glycan. Asn418 and Asn439 each carry an N-linked (GlcNAc...) asparagine glycan. A disulfide bridge connects residues Cys456 and Cys489. 4 consecutive Fibronectin type-III domains span residues 490-610 (ESDV…TNAS), 611-709 (VPSI…TEAE), 735-829 (RPER…TMPA), and 835-928 (IPGP…VPAK). N-linked (GlcNAc...) asparagine glycosylation is found at Asn535, Asn608, Asn623, Asn641, Asn748, Asn757, Asn765, Asn901, and Asn914. Residues 742 to 936 (DVMQVANTTM…AKTTYENFMH (195 aa)) lie on the Extracellular side of the membrane. A helical membrane pass occupies residues 937–960 (LIIALPVAILLIVGGLVIMLYVFH). Residues 961–1373 (RKRNNSRLGN…ALPLPQSSTC (413 aa)) are Cytoplasmic-facing. An IRS1- and SHC1-binding motif is present at residues 978-981 (NPEY). The residue at position 981 (Tyr981) is a Phosphotyrosine. Positions 1000-1276 (ITMNRELGQG…SIKDEMEPSF (277 aa)) constitute a Protein kinase domain. ATP-binding positions include 1006–1014 (LGQGSFGMV) and Lys1034. Catalysis depends on Asp1137, which acts as the Proton acceptor. Tyr1163, Tyr1167, and Tyr1168 each carry phosphotyrosine; by autocatalysis. Residues Lys1170 and Lys1173 each participate in a glycyl lysine isopeptide (Lys-Gly) (interchain with G-Cter in ubiquitin) cross-link. Ser1280 is modified (phosphoserine; by GSK3-beta). Residues 1283 to 1373 (YSEENKPPEP…ALPLPQSSTC (91 aa)) are disordered. A Phosphoserine modification is found at Ser1284. Positions 1292–1305 (PEELEMELEMEPEN) are enriched in acidic residues. Positions 1306-1322 (MESVPLDPSASSASLPL) are enriched in low complexity. Residues 1323-1332 (PERHSGHKAE) show a composition bias toward basic and acidic residues.

The protein belongs to the protein kinase superfamily. Tyr protein kinase family. Insulin receptor subfamily. In terms of assembly, tetramer of 2 alpha and 2 beta chains linked by disulfide bonds. The alpha chains contribute to the formation of the ligand-binding domain, while the beta chain carries the kinase domain. Interacts with PIK3R1 and with the PTB/PID domains of IRS1 and SHC1 in vitro when autophosphorylated on tyrosine residues. Forms a hybrid receptor with INSR, the hybrid is a tetramer consisting of 1 alpha chain and 1 beta chain of INSR and 1 alpha chain and 1 beta chain of IGF1R. Interacts with ARRB1 and ARRB2. Interacts with GRB10. Interacts with RACK1. Interacts with SOCS1, SOCS2 and SOCS3. Interacts with 14-3-3 proteins. Interacts with NMD2. Interacts with MAP3K5. Interacts with STAT3. Found in a ternary complex with IGF1 and ITGAV:ITGB3 or ITGA6:ITGB4. Interacts (nascent precursor form) with ZFAND2B. Autophosphorylated on tyrosine residues in response to ligand binding. Autophosphorylation occurs in trans, i.e. one subunit of the dimeric receptor phosphorylates tyrosine residues on the other subunit. Autophosphorylation occurs in a sequential manner; Tyr-1167 is predominantly phosphorylated first, followed by phosphorylation of Tyr-1163 and Tyr-1168. While every single phosphorylation increases kinase activity, all three tyrosine residues in the kinase activation loop (Tyr-1163, Tyr-1167 and Tyr-1168) have to be phosphorylated for optimal activity. Can be autophosphorylated at additional tyrosine residues (in vitro). Autophosphorylated is followed by phosphorylation of juxtamembrane tyrosines and C-terminal serines. May also be phosphorylated at Tyr-1163 and Tyr-1168 by mTORC2. Phosphorylation of Tyr-981 is required for IRS1- and SHC1-binding. Phosphorylation of Ser-1280 by GSK-3beta restrains kinase activity and promotes cell surface expression, it requires a priming phosphorylation at Ser-1284. Dephosphorylated by PTPN1. Post-translationally, polyubiquitinated at Lys-1170 and Lys-1173 through both 'Lys-48' and 'Lys-29' linkages, promoting receptor endocytosis and subsequent degradation by the proteasome. Ubiquitination is facilitated by pre-existing phosphorylation. In terms of processing, sumoylated with SUMO1. Controlled by regulated intramembrane proteolysis (RIP). Undergoes metalloprotease-dependent constitutive ectodomain shedding to produce a membrane-anchored 52 kDa C-Terminal fragment which is further processed by presenilin gamma-secretase to yield an intracellular 50 kDa fragment.

Its subcellular location is the cell membrane. The catalysed reaction is L-tyrosyl-[protein] + ATP = O-phospho-L-tyrosyl-[protein] + ADP + H(+). With respect to regulation, activated by autophosphorylation at Tyr-1163, Tyr-1167 and Tyr-1168 on the kinase activation loop; phosphorylation at all three tyrosine residues is required for optimal kinase activity. Inhibited by MSC1609119A-1, BMS-754807, PQIP, benzimidazole pyridinone, isoquinolinedione, bis-azaindole, 3-cyanoquinoline, 2,4-bis-arylamino-1,3-pyrimidine, pyrrolopyrimidine, pyrrole-5-carboxaldehyde, picropodophyllin (PPP), tyrphostin derivatives. While most inhibitors bind to the ATP binding pocket, MSC1609119A-1 functions as allosteric inhibitor and binds close to the DFG motif and the activation loop. Functionally, receptor tyrosine kinase which mediates actions of insulin-like growth factor 1 (IGF1). Binds IGF1 with high affinity and IGF2 and insulin (INS) with a lower affinity. The activated IGF1R is involved in cell growth and survival control. IGF1R is crucial for tumor transformation and survival of malignant cell. Ligand binding activates the receptor kinase, leading to receptor autophosphorylation, and tyrosines phosphorylation of multiple substrates, that function as signaling adapter proteins including, the insulin-receptor substrates (IRS1/2), Shc and 14-3-3 proteins. Phosphorylation of IRSs proteins lead to the activation of two main signaling pathways: the PI3K-AKT/PKB pathway and the Ras-MAPK pathway. The result of activating the MAPK pathway is increased cellular proliferation, whereas activating the PI3K pathway inhibits apoptosis and stimulates protein synthesis. Phosphorylated IRS1 can activate the 85 kDa regulatory subunit of PI3K (PIK3R1), leading to activation of several downstream substrates, including protein AKT/PKB. AKT phosphorylation, in turn, enhances protein synthesis through mTOR activation and triggers the antiapoptotic effects of IGFIR through phosphorylation and inactivation of BAD. In parallel to PI3K-driven signaling, recruitment of Grb2/SOS by phosphorylated IRS1 or Shc leads to recruitment of Ras and activation of the ras-MAPK pathway. In addition to these two main signaling pathways IGF1R signals also through the Janus kinase/signal transducer and activator of transcription pathway (JAK/STAT). Phosphorylation of JAK proteins can lead to phosphorylation/activation of signal transducers and activators of transcription (STAT) proteins. In particular activation of STAT3, may be essential for the transforming activity of IGF1R. The JAK/STAT pathway activates gene transcription and may be responsible for the transforming activity. JNK kinases can also be activated by the IGF1R. IGF1 exerts inhibiting activities on JNK activation via phosphorylation and inhibition of MAP3K5/ASK1, which is able to directly associate with the IGF1R. When present in a hybrid receptor with INSR, binds IGF1. The chain is Insulin-like growth factor 1 receptor (Igf1r) from Mus musculus (Mouse).